Reading from the N-terminus, the 306-residue chain is Probable arylamine N-acetyltransferase 3 (306 aa).

The Acyl-thioester intermediate role is filled by cysteine 75. Residues histidine 115 and aspartate 130 contribute to the active site.

This sequence belongs to the arylamine N-acetyltransferase family.

The catalysed reaction is an arylamine + acetyl-CoA = an N-acetylarylamine + CoA. This Dictyostelium discoideum (Social amoeba) protein is Probable arylamine N-acetyltransferase 3.